A 316-amino-acid polypeptide reads, in one-letter code: Acetyl-coenzyme A carboxylase carboxyl transferase subunit beta (316 aa).

A CoA carboxyltransferase N-terminal domain is found at 39-308 (LWHKCSKCGV…TPPMVLWETM (270 aa)). Residues C43, C46, C62, and C65 each coordinate Zn(2+). The C4-type zinc-finger motif lies at 43–65 (CSKCGVLTYTKDLRANQMVCVEC).

This sequence belongs to the AccD/PCCB family. Acetyl-CoA carboxylase is a heterohexamer composed of biotin carboxyl carrier protein (AccB), biotin carboxylase (AccC) and two subunits each of ACCase subunit alpha (AccA) and ACCase subunit beta (AccD). Zn(2+) is required as a cofactor.

It is found in the cytoplasm. It carries out the reaction N(6)-carboxybiotinyl-L-lysyl-[protein] + acetyl-CoA = N(6)-biotinyl-L-lysyl-[protein] + malonyl-CoA. Its pathway is lipid metabolism; malonyl-CoA biosynthesis; malonyl-CoA from acetyl-CoA: step 1/1. Functionally, component of the acetyl coenzyme A carboxylase (ACC) complex. Biotin carboxylase (BC) catalyzes the carboxylation of biotin on its carrier protein (BCCP) and then the CO(2) group is transferred by the transcarboxylase to acetyl-CoA to form malonyl-CoA. This is Acetyl-coenzyme A carboxylase carboxyl transferase subunit beta from Nostoc sp. (strain PCC 7120 / SAG 25.82 / UTEX 2576).